The chain runs to 335 residues: Probable UDP-N-acetylglucosamine pyrophosphorylase (335 aa).

The Substrate binding motif lies at 45–48 (LSGG). Residues 45–48 (LSGG), K59, Q120, and G145 contribute to the UTP site. N146 provides a ligand contact to substrate. D170 provides a ligand contact to UTP. Residues 218-219 (EY) carry the Substrate binding motif. Position 278 (K278) interacts with UTP. A substrate-binding site is contributed by K308.

Belongs to the UDPGP type 1 family.

The protein resides in the cytoplasm. It catalyses the reaction N-acetyl-alpha-D-glucosamine 1-phosphate + UTP + H(+) = UDP-N-acetyl-alpha-D-glucosamine + diphosphate. It participates in nucleotide-sugar biosynthesis; UDP-N-acetyl-alpha-D-glucosamine biosynthesis; UDP-N-acetyl-alpha-D-glucosamine from N-acetyl-alpha-D-glucosamine 1-phosphate: step 1/1. This chain is Probable UDP-N-acetylglucosamine pyrophosphorylase (UAP1), found in Encephalitozoon cuniculi (strain GB-M1) (Microsporidian parasite).